A 141-amino-acid chain; its full sequence is Nucleoside diphosphate kinase (141 aa).

K11, F59, R87, T93, R104, and N114 together coordinate ATP. H117 functions as the Pros-phosphohistidine intermediate in the catalytic mechanism.

It belongs to the NDK family. As to quaternary structure, homotetramer. Mg(2+) serves as cofactor.

The protein resides in the cytoplasm. It carries out the reaction a 2'-deoxyribonucleoside 5'-diphosphate + ATP = a 2'-deoxyribonucleoside 5'-triphosphate + ADP. The enzyme catalyses a ribonucleoside 5'-diphosphate + ATP = a ribonucleoside 5'-triphosphate + ADP. Functionally, major role in the synthesis of nucleoside triphosphates other than ATP. The ATP gamma phosphate is transferred to the NDP beta phosphate via a ping-pong mechanism, using a phosphorylated active-site intermediate. The chain is Nucleoside diphosphate kinase from Serratia proteamaculans (strain 568).